We begin with the raw amino-acid sequence, 312 residues long: tRNA pseudouridine synthase B (312 aa).

Catalysis depends on Asp-46, which acts as the Nucleophile. Positions 74, 177, and 198 each coordinate substrate.

This sequence belongs to the pseudouridine synthase TruB family. Type 1 subfamily.

It carries out the reaction uridine(55) in tRNA = pseudouridine(55) in tRNA. Responsible for synthesis of pseudouridine from uracil-55 in the psi GC loop of transfer RNAs. The chain is tRNA pseudouridine synthase B from Buchnera aphidicola subsp. Acyrthosiphon pisum (strain APS) (Acyrthosiphon pisum symbiotic bacterium).